We begin with the raw amino-acid sequence, 96 residues long: Integration host factor subunit beta (96 aa).

It belongs to the bacterial histone-like protein family. As to quaternary structure, heterodimer of an alpha and a beta chain.

Its function is as follows. This protein is one of the two subunits of integration host factor, a specific DNA-binding protein that functions in genetic recombination as well as in transcriptional and translational control. In Methylocella silvestris (strain DSM 15510 / CIP 108128 / LMG 27833 / NCIMB 13906 / BL2), this protein is Integration host factor subunit beta.